The primary structure comprises 128 residues: UPF0325 protein YaeH (128 aa).

The protein belongs to the UPF0325 family.

The sequence is that of UPF0325 protein YaeH from Escherichia fergusonii (strain ATCC 35469 / DSM 13698 / CCUG 18766 / IAM 14443 / JCM 21226 / LMG 7866 / NBRC 102419 / NCTC 12128 / CDC 0568-73).